Reading from the N-terminus, the 137-residue chain is Putative pre-16S rRNA nuclease (137 aa).

It belongs to the YqgF nuclease family.

The protein localises to the cytoplasm. In terms of biological role, could be a nuclease involved in processing of the 5'-end of pre-16S rRNA. The chain is Putative pre-16S rRNA nuclease from Anaeromyxobacter dehalogenans (strain 2CP-C).